The following is a 388-amino-acid chain: Glucose-6-phosphate/phosphate translocator 1, chloroplastic (388 aa).

Residues 1-65 constitute a chloroplast transit peptide; sequence MVLSVKQTLS…LRAKSPVVRC (65 aa). Transmembrane regions (helical) follow at residues 95-115, 129-149, 158-178, 211-231, 233-253, 273-293, 305-325, and 363-383; these read LKIG…NIYN, STLS…VGIV, FWKT…AATV, FPTS…LSAL, ELNF…AFVF, YACL…AVEG, LATV…FYHL, and TPVQ…TFLY. One can recognise an EamA domain in the interval 112–229; that stretch reads NIYNKKVLNA…IPIIGGCALS (118 aa).

This sequence belongs to the TPT transporter family. GPT (TC 2.A.7.9) subfamily. In terms of tissue distribution, expressed in seeds, flowers, rosette leaves, and roots, with highest levels found in stamens. Found in the root cap, in guard cells and in mesophyll cells.

It is found in the plastid. It localises to the chloroplast membrane. The protein resides in the endoplasmic reticulum membrane. Its subcellular location is the peroxisome membrane. Glucose 6-phosphate (Glc6P) transporter. Also transports inorganic phosphate, 3-phosphoglycerate, triose phosphates and, to a leser extent, phosphoenolpyruvate. Responsible for the transport of Glc6P into plastids of heterotrophic tissues where it can be used as a carbon source for starch biosynthesis, as substrate for fatty acid biosynthesis or as substrate for NADPH generation via the oxidative pentose phosphate pathway (OPPP). Required for pollen maturation and embryo sac development. Preferentially exchanges Glc6P for ribulose-5-phosphate (Ru5P) in reconstituted yeast proteoliposomes. May supply the substrate (Glc6P) for OPPP reactions inside peroxisomes and exchange it with the product Ru5P which leaves the organelle. This Arabidopsis thaliana (Mouse-ear cress) protein is Glucose-6-phosphate/phosphate translocator 1, chloroplastic.